Here is a 178-residue protein sequence, read N- to C-terminus: Gamma-crystallin S (178 aa).

At Ser-2 the chain carries N-acetylserine. An N-terminal arm region spans residues 2 to 5 (SKAG). Beta/gamma crystallin 'Greek key' domains lie at 6 to 44 (TKIT…RVEG) and 45 to 87 (GTWA…RAVH). Positions 88 to 93 (LSSGGQ) are connecting peptide. Beta/gamma crystallin 'Greek key' domains lie at 94–134 (YKLQ…KVLE) and 135–177 (GAWI…RRIV).

It belongs to the beta/gamma-crystallin family. Monomer.

Crystallins are the dominant structural components of the vertebrate eye lens. This chain is Gamma-crystallin S (CRYGS), found in Bos taurus (Bovine).